Consider the following 674-residue polypeptide: Cysteine-rich receptor-like protein kinase 6 (674 aa).

The first 24 residues, 1–24 (MSSLISFNFLFLFSFLTSSFTASA), serve as a signal peptide directing secretion. The Extracellular segment spans residues 25-289 (QDPFYLNHYC…LPGKSGNSTV (265 aa)). 2 consecutive Gnk2-homologous domains span residues 28–132 (FYLN…HKNI) and 139–245 (NEGE…LYPF). Residues N36, N43, N61, N70, N104, N178, and N247 are each glycosylated (N-linked (GlcNAc...) asparagine). Over residues 254-266 (PPLPPPPPPPPPR) the composition is skewed to pro residues. Positions 254 to 284 (PPLPPPPPPPPPRESLVSTPPISSSSLPGKS) are disordered. Positions 268 to 284 (SLVSTPPISSSSLPGKS) are enriched in low complexity. N-linked (GlcNAc...) asparagine glycosylation occurs at N286. A helical transmembrane segment spans residues 290-310 (LVVAVVVLAVLLFIALVGYCF). At 311-674 (LAKKKKKTFD…DESITDLYPR (364 aa)) the chain is on the cytoplasmic side. Residues 351–637 (FAESNKIGRG…TLPVPRQPGF (287 aa)) form the Protein kinase domain. ATP contacts are provided by residues 357-365 (IGRGGFGEV) and K379. Residue Y424 is modified to Phosphotyrosine. The active-site Proton acceptor is the D476. At S480 the chain carries Phosphoserine. The residue at position 516 (T516) is a Phosphothreonine. Phosphotyrosine is present on Y524. The interval 648–674 (LDSDQSTTTKSFPASIDDESITDLYPR) is disordered. Polar residues predominate over residues 650 to 659 (SDQSTTTKSF).

This sequence belongs to the protein kinase superfamily. Ser/Thr protein kinase family. CRK subfamily.

The protein resides in the membrane. The catalysed reaction is L-seryl-[protein] + ATP = O-phospho-L-seryl-[protein] + ADP + H(+). The enzyme catalyses L-threonyl-[protein] + ATP = O-phospho-L-threonyl-[protein] + ADP + H(+). This is Cysteine-rich receptor-like protein kinase 6 (CRK6) from Arabidopsis thaliana (Mouse-ear cress).